The sequence spans 632 residues: Threonine--tRNA ligase (632 aa).

Positions 1-61 (MPIITLPDGT…KTDANLAIIT (61 aa)) constitute a TGS domain. The segment at 242-533 (DHRKIGKIQD…LIEHYEGAYP (292 aa)) is catalytic. Zn(2+)-binding residues include C333, H384, and H510.

Belongs to the class-II aminoacyl-tRNA synthetase family. As to quaternary structure, homodimer. It depends on Zn(2+) as a cofactor.

The protein resides in the cytoplasm. The enzyme catalyses tRNA(Thr) + L-threonine + ATP = L-threonyl-tRNA(Thr) + AMP + diphosphate + H(+). Functionally, catalyzes the attachment of threonine to tRNA(Thr) in a two-step reaction: L-threonine is first activated by ATP to form Thr-AMP and then transferred to the acceptor end of tRNA(Thr). Also edits incorrectly charged L-seryl-tRNA(Thr). The polypeptide is Threonine--tRNA ligase (Ruthia magnifica subsp. Calyptogena magnifica).